We begin with the raw amino-acid sequence, 434 residues long: Nicotinate phosphoribosyltransferase (434 aa).

The residue at position 242 (His242) is a Phosphohistidine; by autocatalysis.

The protein belongs to the NAPRTase family. Transiently phosphorylated on a His residue during the reaction cycle. Phosphorylation strongly increases the affinity for substrates and increases the rate of nicotinate D-ribonucleotide production. Dephosphorylation regenerates the low-affinity form of the enzyme, leading to product release.

The catalysed reaction is nicotinate + 5-phospho-alpha-D-ribose 1-diphosphate + ATP + H2O = nicotinate beta-D-ribonucleotide + ADP + phosphate + diphosphate. The protein operates within cofactor biosynthesis; NAD(+) biosynthesis; nicotinate D-ribonucleotide from nicotinate: step 1/1. Catalyzes the synthesis of beta-nicotinate D-ribonucleotide from nicotinate and 5-phospho-D-ribose 1-phosphate at the expense of ATP. In Bartonella quintana (strain Toulouse) (Rochalimaea quintana), this protein is Nicotinate phosphoribosyltransferase.